The chain runs to 758 residues: 52 kDa repressor of the inhibitor of the protein kinase (758 aa).

The THAP-type zinc-finger motif lies at 1–86 (MPNFCAAPNC…LRDNAIPTIF (86 aa)). The tract at residues 116–141 (QKKIEETSEQEQETNTNAQNPSAEAV) is disordered. S563 is subject to Phosphoserine.

In terms of assembly, interacts with DNAJC3, probably sequestring it.

Functionally, upstream regulator of interferon-induced serine/threonine protein kinase R (PKR). May block the PKR-inhibitory function of DNAJC3, resulting in restoration of kinase activity and suppression of cell growth. The sequence is that of 52 kDa repressor of the inhibitor of the protein kinase from Mus musculus (Mouse).